A 188-amino-acid chain; its full sequence is Elongation factor P (188 aa).

Lys34 is modified (N6-(3,6-diaminohexanoyl)-5-hydroxylysine).

Belongs to the elongation factor P family. Post-translationally, may be beta-lysylated on the epsilon-amino group of Lys-34 by the combined action of EpmA and EpmB, and then hydroxylated on the C5 position of the same residue by EpmC (if this protein is present). Lysylation is critical for the stimulatory effect of EF-P on peptide-bond formation. The lysylation moiety may extend toward the peptidyltransferase center and stabilize the terminal 3-CCA end of the tRNA. Hydroxylation of the C5 position on Lys-34 may allow additional potential stabilizing hydrogen-bond interactions with the P-tRNA.

The protein localises to the cytoplasm. It functions in the pathway protein biosynthesis; polypeptide chain elongation. Involved in peptide bond synthesis. Alleviates ribosome stalling that occurs when 3 or more consecutive Pro residues or the sequence PPG is present in a protein, possibly by augmenting the peptidyl transferase activity of the ribosome. Modification of Lys-34 is required for alleviation. The protein is Elongation factor P of Xanthomonas axonopodis pv. citri (strain 306).